The sequence spans 264 residues: MPQTVRAYTGAIRDTVKSFWHGLSITLSYLARRPTTVQYPDRTPMPVRDMLPPRYRGFLEVDSGICTGCQACERACPIGCIQISLEKDAANPKQRVVTQFDIDEAKCMFCGLCVEPCPTGSIQHTREFEGTHKHIRNLVFRWADPMNPFPVYKVDKNAEYYPRVPLGSLVRQRLETMAWDRSAPQFLPPEPPKPAEAKPAAKAAPAAKPAAAAPAAPAAAAPAAAPAPAKPAAAPAPAAAAAPAAPAAEAPAAPAAPAANPESK.

2 consecutive 4Fe-4S ferredoxin-type domains span residues 57–86 (GFLE…ISLE) and 98–127 (TQFD…HTRE). The [4Fe-4S] cluster site is built by C66, C69, C72, C76, C107, C110, C113, and C117. Residues 183-264 (APQFLPPEPP…AAPAANPESK (82 aa)) form a disordered region. Over residues 197–264 (AKPAAKAAPA…AAPAANPESK (68 aa)) the composition is skewed to low complexity.

This sequence belongs to the complex I 23 kDa subunit family. In terms of assembly, NDH-1 is composed of 14 different subunits. Subunits NuoA, H, J, K, L, M, N constitute the membrane sector of the complex. [4Fe-4S] cluster serves as cofactor.

The protein localises to the cell inner membrane. The enzyme catalyses a quinone + NADH + 5 H(+)(in) = a quinol + NAD(+) + 4 H(+)(out). Its function is as follows. NDH-1 shuttles electrons from NADH, via FMN and iron-sulfur (Fe-S) centers, to quinones in the respiratory chain. The immediate electron acceptor for the enzyme in this species is believed to be ubiquinone. Couples the redox reaction to proton translocation (for every two electrons transferred, four hydrogen ions are translocated across the cytoplasmic membrane), and thus conserves the redox energy in a proton gradient. In Anaeromyxobacter dehalogenans (strain 2CP-C), this protein is NADH-quinone oxidoreductase subunit I 2.